A 670-amino-acid polypeptide reads, in one-letter code: Histone-lysine N-methyltransferase, H3 lysine-9 specific SUVH1 (670 aa).

Positions 53–140 (YPFSSSQANQ…RPISRPENMN (88 aa)) are disordered. Over residues 68–79 (NQAQYPPQHQQP) the composition is skewed to low complexity. The segment covering 123–133 (VKRRIPKKRPI) has biased composition (basic residues). Residues 211–357 (GIVPGVEIGD…HNTFKYKLVR (147 aa)) enclose the YDG domain. In terms of domain architecture, Pre-SET spans 432–492 (FGCDCANLCK…TCKNKVTQMG (61 aa)). 9 residues coordinate Zn(2+): cysteine 434, cysteine 436, cysteine 440, cysteine 447, cysteine 449, cysteine 475, cysteine 479, cysteine 481, and cysteine 484. Residues 495-639 (VRLEVFKTAN…PMTELTYDYG (145 aa)) form the SET domain. S-adenosyl-L-methionine contacts are provided by residues 505–507 (RGW), aspartate 541, tyrosine 543, arginine 593, and 596–597 (NH). Residues cysteine 599, cysteine 658, cysteine 660, and cysteine 665 each contribute to the Zn(2+) site. The Post-SET domain maps to 654–670 (GKRKCFCGSAYCRGSFG).

Belongs to the class V-like SAM-binding methyltransferase superfamily. Histone-lysine methyltransferase family. Suvar3-9 subfamily. Expressed in leaves stems and flowers.

It localises to the nucleus. Its subcellular location is the chromosome. It is found in the centromere. It catalyses the reaction L-lysyl(9)-[histone H3] + 2 S-adenosyl-L-methionine = N(6),N(6)-dimethyl-L-lysyl(9)-[histone H3] + 2 S-adenosyl-L-homocysteine + 2 H(+). In terms of biological role, histone methyltransferase. Methylates 'Lys-9' of histone H3. H3 'Lys-9' methylation represents a specific tag for epigenetic transcriptional repression. The chain is Histone-lysine N-methyltransferase, H3 lysine-9 specific SUVH1 (SUVH1) from Arabidopsis thaliana (Mouse-ear cress).